Reading from the N-terminus, the 119-residue chain is Fluoride-specific ion channel FluC 2 (119 aa).

The next 2 membrane-spanning stretches (helical) occupy residues 1-21 (MIFAVGFGASLGAVARYALTS) and 44-64 (GAFFLGLAFALRLPASVYAFL). Residues glycine 70 and threonine 73 each contribute to the Na(+) site. Residues 98-118 (LLASYLGGAVLLTCGYYLGSL) form a helical membrane-spanning segment.

The protein belongs to the fluoride channel Fluc/FEX (TC 1.A.43) family.

Its subcellular location is the cell membrane. It catalyses the reaction fluoride(in) = fluoride(out). Its activity is regulated as follows. Na(+) is not transported, but it plays an essential structural role and its presence is essential for fluoride channel function. In terms of biological role, fluoride-specific ion channel. Important for reducing fluoride concentration in the cell, thus reducing its toxicity. The protein is Fluoride-specific ion channel FluC 2 of Lactobacillus delbrueckii subsp. bulgaricus (strain ATCC 11842 / DSM 20081 / BCRC 10696 / JCM 1002 / NBRC 13953 / NCIMB 11778 / NCTC 12712 / WDCM 00102 / Lb 14).